A 75-amino-acid polypeptide reads, in one-letter code: Large ribosomal subunit protein bL31 (75 aa).

It belongs to the bacterial ribosomal protein bL31 family. Type A subfamily. Part of the 50S ribosomal subunit.

Binds the 23S rRNA. The sequence is that of Large ribosomal subunit protein bL31 from Rhodopseudomonas palustris (strain BisB18).